Reading from the N-terminus, the 308-residue chain is HPr kinase/phosphorylase (308 aa).

Active-site residues include His138 and Lys159. 153–160 lines the ATP pocket; sequence GESGLGKS. Ser160 provides a ligand contact to Mg(2+). The active-site Proton acceptor; for phosphorylation activity. Proton donor; for dephosphorylation activity is the Asp177. Positions 201–210 are important for the catalytic mechanism of both phosphorylation and dephosphorylation; it reads LEVRGLGLLD. Glu202 contributes to the Mg(2+) binding site. Arg243 is a catalytic residue. Residues 264 to 269 are important for the catalytic mechanism of dephosphorylation; sequence QVAAGR.

Belongs to the HPrK/P family. In terms of assembly, homohexamer. The cofactor is Mg(2+).

The catalysed reaction is [HPr protein]-L-serine + ATP = [HPr protein]-O-phospho-L-serine + ADP + H(+). It carries out the reaction [HPr protein]-O-phospho-L-serine + phosphate + H(+) = [HPr protein]-L-serine + diphosphate. Functionally, catalyzes the ATP- as well as the pyrophosphate-dependent phosphorylation of a specific serine residue in HPr, a phosphocarrier protein of the phosphoenolpyruvate-dependent sugar phosphotransferase system (PTS). HprK/P also catalyzes the pyrophosphate-producing, inorganic phosphate-dependent dephosphorylation (phosphorolysis) of seryl-phosphorylated HPr (P-Ser-HPr). The chain is HPr kinase/phosphorylase from Bordetella avium (strain 197N).